Reading from the N-terminus, the 223-residue chain is Cuticular glutathione peroxidase (223 aa).

The first 19 residues, 1–19 (MSAQLLILSHVVLLQLIVA), serve as a signal peptide directing secretion. A glycan (N-linked (GlcNAc...) asparagine) is linked at Asn39. Residue Cys74 is part of the active site. Residue Asn92 is glycosylated (N-linked (GlcNAc...) asparagine).

Belongs to the glutathione peroxidase family. In terms of assembly, homotetramer.

It is found in the secreted. It carries out the reaction 2 glutathione + H2O2 = glutathione disulfide + 2 H2O. In terms of biological role, could inhibit the oxidative burst of leukocytes and neutralize the secondary products of lipid peroxidation, thus providing the resistance of these parasites to immune effector mechanisms and their persistence in the mammalian host. It may also be involved in the formation of cross-linking residues such as dityrosine, trityrosine and isotrityrosine identified in cuticular collagen. Highly cross-linked external cortex may also serve to protect the parasite from immune attack. In Wuchereria bancrofti, this protein is Cuticular glutathione peroxidase.